We begin with the raw amino-acid sequence, 351 residues long: Phosphate acyltransferase (351 aa).

This sequence belongs to the PlsX family. Homodimer. Probably interacts with PlsY.

Its subcellular location is the cytoplasm. The enzyme catalyses a fatty acyl-[ACP] + phosphate = an acyl phosphate + holo-[ACP]. The protein operates within lipid metabolism; phospholipid metabolism. Catalyzes the reversible formation of acyl-phosphate (acyl-PO(4)) from acyl-[acyl-carrier-protein] (acyl-ACP). This enzyme utilizes acyl-ACP as fatty acyl donor, but not acyl-CoA. This is Phosphate acyltransferase from Neisseria meningitidis serogroup A / serotype 4A (strain DSM 15465 / Z2491).